The primary structure comprises 410 residues: Probable ATP-dependent RNA helicase MG308 (410 aa).

In terms of domain architecture, Helicase ATP-binding spans 26–179 (VFKLWPFQNI…KKQVINTKVI (154 aa)). 39 to 46 (AETGSGKT) contacts ATP. The DEID box signature appears at 126–129 (DEID). Residues 190 to 357 (LVKHFVVHLN…DLKFLTENNQ (168 aa)) form the Helicase C-terminal domain.

Belongs to the DEAD box helicase family.

It catalyses the reaction ATP + H2O = ADP + phosphate + H(+). This chain is Probable ATP-dependent RNA helicase MG308, found in Mycoplasma genitalium (strain ATCC 33530 / DSM 19775 / NCTC 10195 / G37) (Mycoplasmoides genitalium).